The chain runs to 172 residues: uncharacterized protein (172 aa).

Gly residues predominate over residues 147-159; it reads AGSGSGSGSGSGS. Residues 147–172 form a disordered region; it reads AGSGSGSGSGSGSDTGPFKKSQYKIL.

This is an uncharacterized protein from Homo sapiens (Human).